Here is a 150-residue protein sequence, read N- to C-terminus: Small ribosomal subunit protein uS11x (150 aa).

The protein belongs to the universal ribosomal protein uS11 family.

It is found in the cytoplasm. The chain is Small ribosomal subunit protein uS11x (RPS14C) from Arabidopsis thaliana (Mouse-ear cress).